A 753-amino-acid chain; its full sequence is 5-methyltetrahydropteroyltriglutamate--homocysteine methyltransferase (753 aa).

Residues Arg17–Lys20 and Lys117 each bind 5-methyltetrahydropteroyltri-L-glutamate. Residues Ile431–Ser433 and Glu484 contribute to the L-homocysteine site. Residues Ile431–Ser433 and Glu484 each bind L-methionine. 5-methyltetrahydropteroyltri-L-glutamate-binding positions include Arg515 to Cys516 and Trp561. Position 599 (Asp599) interacts with L-homocysteine. Position 599 (Asp599) interacts with L-methionine. Residue Glu605 coordinates 5-methyltetrahydropteroyltri-L-glutamate. Zn(2+) contacts are provided by His641, Cys643, and Glu665. The active-site Proton donor is His694. Zn(2+) is bound at residue Cys726.

Belongs to the vitamin-B12 independent methionine synthase family. The cofactor is Zn(2+).

It catalyses the reaction 5-methyltetrahydropteroyltri-L-glutamate + L-homocysteine = tetrahydropteroyltri-L-glutamate + L-methionine. It functions in the pathway amino-acid biosynthesis; L-methionine biosynthesis via de novo pathway; L-methionine from L-homocysteine (MetE route): step 1/1. Functionally, catalyzes the transfer of a methyl group from 5-methyltetrahydrofolate to homocysteine resulting in methionine formation. This Escherichia fergusonii (strain ATCC 35469 / DSM 13698 / CCUG 18766 / IAM 14443 / JCM 21226 / LMG 7866 / NBRC 102419 / NCTC 12128 / CDC 0568-73) protein is 5-methyltetrahydropteroyltriglutamate--homocysteine methyltransferase.